The sequence spans 76 residues: ATP synthase subunit 9, mitochondrial (76 aa).

Helical transmembrane passes span 14–34 (IATI…AALI) and 52–72 (ILGF…SFLL).

It belongs to the ATPase C chain family. In terms of assembly, F-type ATPases have 2 components, CF(1) - the catalytic core - and CF(0) - the membrane proton channel. CF(1) has five subunits: alpha(3), beta(3), gamma(1), delta(1), epsilon(1). CF(0) has three main subunits: a, b and c.

The protein resides in the mitochondrion membrane. Functionally, mitochondrial membrane ATP synthase (F(1)F(0) ATP synthase or Complex V) produces ATP from ADP in the presence of a proton gradient across the membrane which is generated by electron transport complexes of the respiratory chain. F-type ATPases consist of two structural domains, F(1) - containing the extramembraneous catalytic core and F(0) - containing the membrane proton channel, linked together by a central stalk and a peripheral stalk. During catalysis, ATP synthesis in the catalytic domain of F(1) is coupled via a rotary mechanism of the central stalk subunits to proton translocation. Part of the complex F(0) domain. A homomeric c-ring of probably 10 subunits is part of the complex rotary element. This Wickerhamomyces canadensis (Yeast) protein is ATP synthase subunit 9, mitochondrial (ATP9).